The following is a 48-amino-acid chain: Ribulose bisphosphate carboxylase large chain (48 aa).

It belongs to the RuBisCO large chain family. Type I subfamily. Heterohexadecamer of 8 large chains and 8 small chains.

Its subcellular location is the plastid. The protein localises to the chloroplast. It catalyses the reaction 2 (2R)-3-phosphoglycerate + 2 H(+) = D-ribulose 1,5-bisphosphate + CO2 + H2O. The catalysed reaction is D-ribulose 1,5-bisphosphate + O2 = 2-phosphoglycolate + (2R)-3-phosphoglycerate + 2 H(+). Its function is as follows. RuBisCO catalyzes two reactions: the carboxylation of D-ribulose 1,5-bisphosphate, the primary event in carbon dioxide fixation, as well as the oxidative fragmentation of the pentose substrate in the photorespiration process. Both reactions occur simultaneously and in competition at the same active site. The chain is Ribulose bisphosphate carboxylase large chain (rbcL) from Pinus pinaster (Maritime pine).